The primary structure comprises 645 residues: Protein FAM47B (645 aa).

3 stretches are compositionally biased toward basic and acidic residues: residues 1 to 11 (MGDRRPQDRPR), 238 to 251 (EPPETRASHLRVDP), and 288 to 299 (PETRVSHLHPEP). Disordered stretches follow at residues 1-23 (MGDRRPQDRPRSQGMDSKPWYCD) and 168-321 (AREK…SLCP).

This sequence belongs to the FAM47 family.

This chain is Protein FAM47B (FAM47B), found in Homo sapiens (Human).